We begin with the raw amino-acid sequence, 34 residues long: Photosystem I reaction center subunit XII (34 aa).

The chain crosses the membrane as a helical span at residues 9-29 (LIILGLIVVMHAGVLALRLGI).

The protein belongs to the PsaM family.

The protein resides in the cellular thylakoid membrane. The protein is Photosystem I reaction center subunit XII of Prochlorococcus marinus subsp. pastoris (strain CCMP1986 / NIES-2087 / MED4).